A 206-amino-acid polypeptide reads, in one-letter code: Large ribosomal subunit protein uL13z (206 aa).

Belongs to the universal ribosomal protein uL13 family.

The sequence is that of Large ribosomal subunit protein uL13z (RPL13AA) from Arabidopsis thaliana (Mouse-ear cress).